The primary structure comprises 153 residues: Aspartate carbamoyltransferase regulatory chain (153 aa).

The Zn(2+) site is built by cysteine 109, cysteine 114, cysteine 138, and cysteine 141.

It belongs to the PyrI family. Contains catalytic and regulatory chains. It depends on Zn(2+) as a cofactor.

In terms of biological role, involved in allosteric regulation of aspartate carbamoyltransferase. The polypeptide is Aspartate carbamoyltransferase regulatory chain (Salmonella schwarzengrund (strain CVM19633)).